The sequence spans 657 residues: Conserved oligomeric Golgi complex subunit 6 (657 aa).

The protein belongs to the COG6 family. Component of the conserved oligomeric Golgi complex which is composed of eight different subunits and is required for normal Golgi morphology and localization.

The protein localises to the golgi apparatus membrane. Functionally, required for normal Golgi function. The polypeptide is Conserved oligomeric Golgi complex subunit 6 (COG6) (Homo sapiens (Human)).